The following is an 879-amino-acid chain: Alanine--tRNA ligase (879 aa).

4 residues coordinate Zn(2+): His566, His570, Cys668, and His672.

This sequence belongs to the class-II aminoacyl-tRNA synthetase family. Requires Zn(2+) as cofactor.

It is found in the cytoplasm. The catalysed reaction is tRNA(Ala) + L-alanine + ATP = L-alanyl-tRNA(Ala) + AMP + diphosphate. Functionally, catalyzes the attachment of alanine to tRNA(Ala) in a two-step reaction: alanine is first activated by ATP to form Ala-AMP and then transferred to the acceptor end of tRNA(Ala). Also edits incorrectly charged Ser-tRNA(Ala) and Gly-tRNA(Ala) via its editing domain. The polypeptide is Alanine--tRNA ligase (Clostridium botulinum (strain Alaska E43 / Type E3)).